A 135-amino-acid chain; its full sequence is Small ribosomal subunit protein uS9 (135 aa).

The span at 108–118 (VGDPRRTEPHK) shows a compositional bias: basic and acidic residues. Positions 108 to 135 (VGDPRRTEPHKPNRSTKGPRAKRQKSYR) are disordered. Basic residues predominate over residues 119–135 (PNRSTKGPRAKRQKSYR).

This sequence belongs to the universal ribosomal protein uS9 family.

In Pyrococcus abyssi (strain GE5 / Orsay), this protein is Small ribosomal subunit protein uS9 (rps9).